Consider the following 857-residue polypeptide: MTDSEETVLYVEHRYVCSECGEEYPSLEEALEHQQSHAAALQEPQYQIVGVNSLENQYQCLECGLLLRTPEDLLAHQELHPTQNEIQKPKRPTRSEIHYECPECKALFNSQDVWMAHRYTHMQVQDVSHSKIVLQTDDHVIEDGLQLMCAPAVPSEVHLVTGDPHFHVSTPSSASVSHTQVLVDLEHSYKKNEGAGEDCAMELLLYKCSECTQLFQTPGEFLEHQGTHFSGQERISDTNSHLDQTPQLSLNGQEKEPIINQGNTCTDYQAENKELLVQPEGEQAEQDSWTVDREPVFSCGDCSETFQTTKDLEEHQISHQNGPFSCPLCSKVFPTYPEVGEHLKSHRSESRYLCVDCGLAFVSEAVLLNHRRSHLANPLFTCECGLTFLNMTRFLYHRRVHSSKQPDTGAVEEKKTVNSIAPSPAGNFHCDPCGKDFPLLSQFLRHQRFVHALERRHKCPTCGKHFKKGSHLRTHMLTHTGERPYSCTVCSKSFNSQANLLRHRLTHTGEKPYKCQLCGKAFSQSSTLQQHQYVHGQAYLYKCNECGINFHRPYRLLLHQYHHTGEYPYKCQDCGLSFLLKRLLEVHQLGHRGEEPHRCRECGTNFPSVQRLQDHRCSKAGDGGGEKLECPICGKKVTSDAHLNTHVAAQHSGNKRSNVSSGKGTPVLPRNKLKGGGGKNLECSDCHKTFSTETSLQVHRRIHTGERPYPCPDCGKAFRQSTHLKDHRRLHTGEKPFKCDVCGKAFTIAVRLSEHKRIHTGERPHSCPDCGRAYRSFSNLWKHRKLHREQQVQLQEPESQPADLSSTVAILETVETIPIIETVEIFPEGSTISVQDIQFETLQVENIHLGNIQIGTL.

14 consecutive C2H2-type zinc fingers follow at residues 15 to 37, 58 to 80, 99 to 121, 206 to 228, 297 to 319, 324 to 346, 352 to 374, 380 to 401, 428 to 451, 457 to 479, 485 to 507, 513 to 535, 541 to 563, and 569 to 591; these read YVCSECGEEYPSLEEALEHQQSH, YQCLECGLLLRTPEDLLAHQELH, YECPECKALFNSQDVWMAHRYTH, YKCSECTQLFQTPGEFLEHQGTH, FSCGDCSETFQTTKDLEEHQISH, FSCPLCSKVFPTYPEVGEHLKSH, YLCVDCGLAFVSEAVLLNHRRSH, FTCECGLTFLNMTRFLYHRRVH, FHCDPCGKDFPLLSQFLRHQRFVH, HKCPTCGKHFKKGSHLRTHMLTH, YSCTVCSKSFNSQANLLRHRLTH, YKCQLCGKAFSQSSTLQQHQYVH, YKCNECGINFHRPYRLLLHQYHH, and YKCQDCGLSFLLKRLLEVHQLGH. A C2H2-type 15; degenerate zinc finger spans residues 597-619; it reads HRCRECGTNFPSVQRLQDHRCSK. C2H2-type zinc fingers lie at residues 628–651, 681–703, 709–731, 737–759, and 765–787; these read LECPICGKKVTSDAHLNTHVAAQH, LECSDCHKTFSTETSLQVHRRIH, YPCPDCGKAFRQSTHLKDHRRLH, FKCDVCGKAFTIAVRLSEHKRIH, and HSCPDCGRAYRSFSNLWKHRKLH. The interval 648–678 is disordered; sequence AAQHSGNKRSNVSSGKGTPVLPRNKLKGGGG. Over residues 651-663 the composition is skewed to polar residues; that stretch reads HSGNKRSNVSSGK.

It belongs to the krueppel C2H2-type zinc-finger protein family.

The protein localises to the nucleus. May be involved in transcriptional regulation. The sequence is that of Zinc finger protein 574 (znf574) from Xenopus tropicalis (Western clawed frog).